A 344-amino-acid polypeptide reads, in one-letter code: Prickle-like protein 4 (344 aa).

The region spanning 1 to 81 (MSPQGPAVLS…ARLVLPKLEG (81 aa)) is the PET domain. 2 consecutive LIM zinc-binding domains span residues 82-147 (HTCE…LLRP) and 148-207 (RCPA…RYSD). The tract at residues 253–344 (GSSLQTQRGL…NASKTHCTMC (92 aa)) is disordered. The segment covering 257 to 271 (QTQRGLPGSSPQQEN) has biased composition (polar residues). A compositionally biased stretch (basic and acidic residues) spans 272–296 (RPGDKAEAPKGQEQCRLETIRDPKD). Positions 322-344 (SWKTPGSLQAEDSNASKTHCTMC) are enriched in polar residues.

The protein belongs to the prickle / espinas / testin family. As to expression, expressed in a broad range of normal tissues as well as in hepatocellular carcinoma, breast cancer and prostate cancer tissues.

In Homo sapiens (Human), this protein is Prickle-like protein 4 (PRICKLE4).